A 182-amino-acid chain; its full sequence is Ribosome-recycling factor (182 aa).

The tract at residues 137–158 (KKSEKESEISEDQSRDEQDNVQ) is disordered.

Belongs to the RRF family.

The protein resides in the cytoplasm. Its function is as follows. Responsible for the release of ribosomes from messenger RNA at the termination of protein biosynthesis. May increase the efficiency of translation by recycling ribosomes from one round of translation to another. The chain is Ribosome-recycling factor from Prochlorococcus marinus (strain MIT 9211).